The following is a 752-amino-acid chain: Polyribonucleotide nucleotidyltransferase (752 aa).

2 residues coordinate Mg(2+): Asp529 and Asp535. In terms of domain architecture, KH spans Pro595–Ile654. The S1 motif domain maps to Gly666 to Val735.

It belongs to the polyribonucleotide nucleotidyltransferase family. Mg(2+) is required as a cofactor.

It is found in the cytoplasm. The catalysed reaction is RNA(n+1) + phosphate = RNA(n) + a ribonucleoside 5'-diphosphate. Its function is as follows. Involved in mRNA degradation. Catalyzes the phosphorolysis of single-stranded polyribonucleotides processively in the 3'- to 5'-direction. This is Polyribonucleotide nucleotidyltransferase from Mycobacterium tuberculosis (strain ATCC 25177 / H37Ra).